The following is an 88-amino-acid chain: Probable Fe(2+)-trafficking protein (88 aa).

It belongs to the Fe(2+)-trafficking protein family.

In terms of biological role, could be a mediator in iron transactions between iron acquisition and iron-requiring processes, such as synthesis and/or repair of Fe-S clusters in biosynthetic enzymes. The sequence is that of Probable Fe(2+)-trafficking protein from Neisseria gonorrhoeae (strain ATCC 700825 / FA 1090).